A 404-amino-acid polypeptide reads, in one-letter code: Probable tRNA sulfurtransferase (404 aa).

In terms of domain architecture, THUMP spans 60-165; sequence HEVAESLKEI…DEAAYISYED (106 aa). ATP is bound by residues 183–184, 208–209, Arg265, Gly287, and Gln296; these read ML and HF.

Belongs to the ThiI family.

The protein resides in the cytoplasm. The enzyme catalyses [ThiI sulfur-carrier protein]-S-sulfanyl-L-cysteine + a uridine in tRNA + 2 reduced [2Fe-2S]-[ferredoxin] + ATP + H(+) = [ThiI sulfur-carrier protein]-L-cysteine + a 4-thiouridine in tRNA + 2 oxidized [2Fe-2S]-[ferredoxin] + AMP + diphosphate. It catalyses the reaction [ThiS sulfur-carrier protein]-C-terminal Gly-Gly-AMP + S-sulfanyl-L-cysteinyl-[cysteine desulfurase] + AH2 = [ThiS sulfur-carrier protein]-C-terminal-Gly-aminoethanethioate + L-cysteinyl-[cysteine desulfurase] + A + AMP + 2 H(+). It functions in the pathway cofactor biosynthesis; thiamine diphosphate biosynthesis. Catalyzes the ATP-dependent transfer of a sulfur to tRNA to produce 4-thiouridine in position 8 of tRNAs, which functions as a near-UV photosensor. Also catalyzes the transfer of sulfur to the sulfur carrier protein ThiS, forming ThiS-thiocarboxylate. This is a step in the synthesis of thiazole, in the thiamine biosynthesis pathway. The sulfur is donated as persulfide by IscS. In Streptococcus agalactiae serotype V (strain ATCC BAA-611 / 2603 V/R), this protein is Probable tRNA sulfurtransferase.